Here is a 342-residue protein sequence, read N- to C-terminus: Protein rough sheath 2 homolog (342 aa).

2 consecutive HTH myb-type domains span residues 1–58 (MQPP…KNYL) and 59–113 (RPGI…EKQQ). DNA-binding regions (H-T-H motif) lie at residues 32–58 (WSLV…KNYL) and 86–109 (WKKI…EVFK). Positions 253–304 (RRREATEEFEAKMRALREEQAAAVERVEAEYREKMAGLRRDAEAKEQKMAEQ) form a coiled coil.

The protein localises to the nucleus. In terms of biological role, transcription factor required for normal cell differentiation. May interact with other proteins to repress the knox homeobox genes. This is Protein rough sheath 2 homolog (RS2) from Oryza sativa subsp. japonica (Rice).